The following is a 119-amino-acid chain: Membrane-anchored ubiquitin-fold protein 6 (119 aa).

Positions 8 to 76 constitute a Ubiquitin-like domain; sequence IELKFRLADG…NNRTLAESRL (69 aa). Residue cysteine 114 is the site of S-palmitoyl cysteine attachment. Cysteine methyl ester is present on cysteine 116. The S-geranylgeranyl cysteine moiety is linked to residue cysteine 116. The propeptide at 117-119 is removed in mature form; it reads TIL.

Ubiquitous.

The protein localises to the cell membrane. Its function is as follows. May serve as docking site to facilitate the association of other proteins to the plasma membrane. The chain is Membrane-anchored ubiquitin-fold protein 6 (MUB6) from Arabidopsis thaliana (Mouse-ear cress).